Reading from the N-terminus, the 308-residue chain is Probable manganese-dependent inorganic pyrophosphatase (308 aa).

Residues His-9, Asp-13, Asp-15, Asp-75, His-97, and Asp-149 each coordinate Mn(2+).

Belongs to the PPase class C family. Requires Mn(2+) as cofactor.

Its subcellular location is the cytoplasm. It carries out the reaction diphosphate + H2O = 2 phosphate + H(+). This chain is Probable manganese-dependent inorganic pyrophosphatase, found in Listeria monocytogenes serotype 4a (strain HCC23).